Here is a 607-residue protein sequence, read N- to C-terminus: Probable Ufm1-specific protease 2 (607 aa).

Residues Cys440, Asp564, and His566 contribute to the active site.

This sequence belongs to the peptidase C78 family.

Its function is as follows. Thiol protease which recognizes and hydrolyzes the peptide bond at the C-terminal Gly of UFM1, a ubiquitin-like modifier protein bound to a number of target proteins. Does not hydrolyze SUMO1 or ISG15 ubiquitin-like proteins. The polypeptide is Probable Ufm1-specific protease 2 (Drosophila melanogaster (Fruit fly)).